We begin with the raw amino-acid sequence, 316 residues long: 4-diphosphocytidyl-2-C-methyl-D-erythritol kinase (316 aa).

The active site involves Lys11. 99–109 (PVAAGLAGGST) contacts ATP. Residue Asp141 is part of the active site.

Belongs to the GHMP kinase family. IspE subfamily.

It catalyses the reaction 4-CDP-2-C-methyl-D-erythritol + ATP = 4-CDP-2-C-methyl-D-erythritol 2-phosphate + ADP + H(+). It participates in isoprenoid biosynthesis; isopentenyl diphosphate biosynthesis via DXP pathway; isopentenyl diphosphate from 1-deoxy-D-xylulose 5-phosphate: step 3/6. Catalyzes the phosphorylation of the position 2 hydroxy group of 4-diphosphocytidyl-2C-methyl-D-erythritol. This is 4-diphosphocytidyl-2-C-methyl-D-erythritol kinase from Gloeothece citriformis (strain PCC 7424) (Cyanothece sp. (strain PCC 7424)).